Consider the following 568-residue polypeptide: 2-succinyl-5-enolpyruvyl-6-hydroxy-3-cyclohexene-1-carboxylate synthase (568 aa).

The protein belongs to the TPP enzyme family. MenD subfamily. In terms of assembly, homodimer. Requires Mg(2+) as cofactor. The cofactor is Mn(2+). Thiamine diphosphate is required as a cofactor.

The catalysed reaction is isochorismate + 2-oxoglutarate + H(+) = 5-enolpyruvoyl-6-hydroxy-2-succinyl-cyclohex-3-ene-1-carboxylate + CO2. Its pathway is quinol/quinone metabolism; 1,4-dihydroxy-2-naphthoate biosynthesis; 1,4-dihydroxy-2-naphthoate from chorismate: step 2/7. It functions in the pathway quinol/quinone metabolism; menaquinone biosynthesis. Functionally, catalyzes the thiamine diphosphate-dependent decarboxylation of 2-oxoglutarate and the subsequent addition of the resulting succinic semialdehyde-thiamine pyrophosphate anion to isochorismate to yield 2-succinyl-5-enolpyruvyl-6-hydroxy-3-cyclohexene-1-carboxylate (SEPHCHC). In Actinobacillus pleuropneumoniae serotype 3 (strain JL03), this protein is 2-succinyl-5-enolpyruvyl-6-hydroxy-3-cyclohexene-1-carboxylate synthase.